The chain runs to 70 residues: Conotoxin Cal6.11 (70 aa).

The first 22 residues, methionine 1–alanine 22, serve as a signal peptide directing secretion. Positions aspartate 23–serine 43 are excised as a propeptide. Intrachain disulfides connect cysteine 46–cysteine 57, cysteine 50–cysteine 62, and cysteine 56–cysteine 69. 2 positions are modified to 4-hydroxyproline: proline 48 and proline 58. 4-carboxyglutamate occurs at positions 60 and 67.

The protein belongs to the conotoxin O1 superfamily. As to expression, expressed by the venom duct.

Its subcellular location is the secreted. Functionally, probable neurotoxin with unknown target. Possibly targets ion channels. This Californiconus californicus (California cone) protein is Conotoxin Cal6.11.